A 340-amino-acid chain; its full sequence is Sideroflexin-5 (340 aa).

The next 4 helical transmembrane spans lie at 103 to 123, 163 to 183, 254 to 274, and 287 to 307; these read IFMP…VVGL, FIQG…GLNV, LTRV…MSML, and LLPV…PLAI.

This sequence belongs to the sideroflexin family. In terms of tissue distribution, primarily expressed in the brain.

The protein localises to the mitochondrion inner membrane. It catalyses the reaction citrate(in) = citrate(out). Its function is as follows. Mitochondrial amino-acid transporter. Transports citrate. Does not act as a serine transporter: not able to mediate transport of serine into mitochondria. In brown adipose tissue, plays a role in the regulation of UCP1-dependent thermogenesis probably by supporting mitochondrial glycerol-3-phosphate utilization. The protein is Sideroflexin-5 of Homo sapiens (Human).